Here is a 77-residue protein sequence, read N- to C-terminus: Small ribosomal subunit protein bS18 (77 aa).

Belongs to the bacterial ribosomal protein bS18 family. As to quaternary structure, part of the 30S ribosomal subunit. Forms a tight heterodimer with protein bS6.

Binds as a heterodimer with protein bS6 to the central domain of the 16S rRNA, where it helps stabilize the platform of the 30S subunit. This is Small ribosomal subunit protein bS18 from Bacillus thuringiensis subsp. konkukian (strain 97-27).